We begin with the raw amino-acid sequence, 476 residues long: Aspartyl/glutamyl-tRNA(Asn/Gln) amidotransferase subunit B (476 aa).

This sequence belongs to the GatB/GatE family. GatB subfamily. As to quaternary structure, heterotrimer of A, B and C subunits.

The enzyme catalyses L-glutamyl-tRNA(Gln) + L-glutamine + ATP + H2O = L-glutaminyl-tRNA(Gln) + L-glutamate + ADP + phosphate + H(+). The catalysed reaction is L-aspartyl-tRNA(Asn) + L-glutamine + ATP + H2O = L-asparaginyl-tRNA(Asn) + L-glutamate + ADP + phosphate + 2 H(+). Functionally, allows the formation of correctly charged Asn-tRNA(Asn) or Gln-tRNA(Gln) through the transamidation of misacylated Asp-tRNA(Asn) or Glu-tRNA(Gln) in organisms which lack either or both of asparaginyl-tRNA or glutaminyl-tRNA synthetases. The reaction takes place in the presence of glutamine and ATP through an activated phospho-Asp-tRNA(Asn) or phospho-Glu-tRNA(Gln). The polypeptide is Aspartyl/glutamyl-tRNA(Asn/Gln) amidotransferase subunit B (Oceanobacillus iheyensis (strain DSM 14371 / CIP 107618 / JCM 11309 / KCTC 3954 / HTE831)).